We begin with the raw amino-acid sequence, 367 residues long: F-box protein At3g56470 (367 aa).

The segment covering 1–18 (MVTRRRSKKKKKTKRKKQ) has biased composition (basic residues). The interval 1 to 24 (MVTRRRSKKKKKTKRKKQSSKEKE) is disordered. Positions 26–81 (YQTFINLPCDLLQLVISRLPLKDNIRASAVCKTWHEACVSLRVIHTSPWLIYFSKT) constitute an F-box domain.

The chain is F-box protein At3g56470 from Arabidopsis thaliana (Mouse-ear cress).